The primary structure comprises 222 residues: Phosphatidylinositol phosphate synthase (222 aa).

31–34 lines the a CDP-1,2-diacyl-sn-glycerol pocket; it reads DIVT. The next 2 membrane-spanning stretches (helical) occupy residues 32 to 49 and 55 to 74; these read IVTL…LTLF and WWGA…DGAM. Mg(2+) contacts are provided by aspartate 68 and aspartate 71. Residues glycine 72, arginine 76, and threonine 82 each coordinate a CDP-1,2-diacyl-sn-glycerol. Mg(2+) is bound by residues aspartate 89 and aspartate 93. Aspartate 93 (proton acceptor) is an active-site residue. Helical transmembrane passes span 95 to 112, 118 to 136, 156 to 173, and 179 to 196; these read LGDG…AFGL, VVAT…YIKA, LVIV…FFPL, and VAMW…LQRV.

Belongs to the CDP-alcohol phosphatidyltransferase class-I family. In terms of assembly, homodimer. Mg(2+) serves as cofactor.

The protein localises to the cell membrane. It is found in the secreted. The protein resides in the cell wall. The enzyme catalyses a CDP-1,2-diacyl-sn-glycerol + 1D-myo-inositol 3-phosphate = a 1,2-diacyl-sn-glycero-3-phospho-(1D-myo-inositol-3-phosphate) + CMP + H(+). It catalyses the reaction 1,2-di-(9Z-octadecenoyl)-sn-glycero-3-cytidine-5'-diphosphate + 1D-myo-inositol 3-phosphate = 1,2-di-(9Z-octadecenoyl)-sn-glycero-3-phospho-(1D-myo-inositol-3-phosphate) + CMP + H(+). The catalysed reaction is 1,2-dihexadecanoyl-sn-glycero-3-CDP + 1D-myo-inositol 3-phosphate = 1,2-dihexadecanoyl-sn-glycero-3-phospho-(1D-myo-inositol-3-phosphate) + CMP + H(+). Its pathway is phospholipid metabolism; phosphatidylinositol phosphate biosynthesis. With respect to regulation, competitively inhibited by several inositol 1-phosphate analogs, including the phosphonate analog 1-deoxy-1-phosphonomethyl-myo-inositol (Ino-C-P). This leads to inhibition of M.smegmatis growth. Catalyzes the conjugation of the 1'-hydroxyl group of D-myo-inositol-3-phosphate (also named L-myo-inositol-1-phosphate) with a lipid tail of cytidine diphosphate diacylglycerol (CDP-DAG), forming phosphatidylinositol phosphate (PIP) and CMP. PIP is a precursor of phosphatidylinositol (PI) which is an essential lipid for mycobacteria required for formation of their cell wall. Is essential to the survival of M.smegmatis. The polypeptide is Phosphatidylinositol phosphate synthase (Mycolicibacterium smegmatis (strain ATCC 700084 / mc(2)155) (Mycobacterium smegmatis)).